Reading from the N-terminus, the 490-residue chain is Protein nucleotidyltransferase YdiU (490 aa).

ATP-binding residues include Gly-89, Gly-91, Arg-92, Lys-112, Asp-124, Gly-125, Arg-175, and Arg-182. The Proton acceptor role is filled by Asp-251. The Mg(2+) site is built by Asn-252 and Asp-261. Residue Asp-261 coordinates ATP.

It belongs to the SELO family. Mg(2+) serves as cofactor. The cofactor is Mn(2+).

The enzyme catalyses L-seryl-[protein] + ATP = 3-O-(5'-adenylyl)-L-seryl-[protein] + diphosphate. It carries out the reaction L-threonyl-[protein] + ATP = 3-O-(5'-adenylyl)-L-threonyl-[protein] + diphosphate. It catalyses the reaction L-tyrosyl-[protein] + ATP = O-(5'-adenylyl)-L-tyrosyl-[protein] + diphosphate. The catalysed reaction is L-histidyl-[protein] + UTP = N(tele)-(5'-uridylyl)-L-histidyl-[protein] + diphosphate. The enzyme catalyses L-seryl-[protein] + UTP = O-(5'-uridylyl)-L-seryl-[protein] + diphosphate. It carries out the reaction L-tyrosyl-[protein] + UTP = O-(5'-uridylyl)-L-tyrosyl-[protein] + diphosphate. Its function is as follows. Nucleotidyltransferase involved in the post-translational modification of proteins. It can catalyze the addition of adenosine monophosphate (AMP) or uridine monophosphate (UMP) to a protein, resulting in modifications known as AMPylation and UMPylation. The sequence is that of Protein nucleotidyltransferase YdiU from Vibrio vulnificus (strain CMCP6).